Reading from the N-terminus, the 432-residue chain is Phosphomethylpyrimidine synthase (432 aa).

Substrate contacts are provided by residues Asn66, Met95, Tyr124, His163, 185–187 (SRG), 226–229 (DGMR), and Glu265. His269 serves as a coordination point for Zn(2+). Position 292 (Tyr292) interacts with substrate. His333 is a Zn(2+) binding site. 3 residues coordinate [4Fe-4S] cluster: Cys409, Cys412, and Cys416.

It belongs to the ThiC family. [4Fe-4S] cluster serves as cofactor.

The enzyme catalyses 5-amino-1-(5-phospho-beta-D-ribosyl)imidazole + S-adenosyl-L-methionine = 4-amino-2-methyl-5-(phosphooxymethyl)pyrimidine + CO + 5'-deoxyadenosine + formate + L-methionine + 3 H(+). It functions in the pathway cofactor biosynthesis; thiamine diphosphate biosynthesis. Catalyzes the synthesis of the hydroxymethylpyrimidine phosphate (HMP-P) moiety of thiamine from aminoimidazole ribotide (AIR) in a radical S-adenosyl-L-methionine (SAM)-dependent reaction. In Desulforudis audaxviator (strain MP104C), this protein is Phosphomethylpyrimidine synthase.